The following is a 104-amino-acid chain: Putative protein 22K (104 aa).

Residues 35–104 form a disordered region; the sequence is YKQLEKELGE…KAPAAKAPSK (70 aa). Residues 60–78 show a composition bias toward acidic residues; the sequence is PLSEGELEEISEEEEEEGE. Low complexity predominate over residues 94-104; sequence SKAPAAKAPSK.

In Snake adenovirus serotype 1 (SnAdV-1), this protein is Putative protein 22K.